Reading from the N-terminus, the 599-residue chain is UvrABC system protein C (599 aa).

The region spanning 18 to 96 is the GIY-YIG domain; that stretch reads QLPGVYKMLG…IKQHRPPYNI (79 aa). The 36-residue stretch at 207-242 folds into the UVR domain; sequence KELNQELIAKMEQAAADLEFEKAVFYRDRLSLLREV.

Belongs to the UvrC family. Interacts with UvrB in an incision complex.

It is found in the cytoplasm. Functionally, the UvrABC repair system catalyzes the recognition and processing of DNA lesions. UvrC both incises the 5' and 3' sides of the lesion. The N-terminal half is responsible for the 3' incision and the C-terminal half is responsible for the 5' incision. This chain is UvrABC system protein C, found in Acinetobacter baumannii (strain SDF).